We begin with the raw amino-acid sequence, 493 residues long: Glutamyl-tRNA(Gln) amidotransferase subunit A (493 aa).

Active-site charge relay system residues include Lys-78 and Ser-158. Ser-182 acts as the Acyl-ester intermediate in catalysis.

It belongs to the amidase family. GatA subfamily. Heterotrimer of A, B and C subunits.

The catalysed reaction is L-glutamyl-tRNA(Gln) + L-glutamine + ATP + H2O = L-glutaminyl-tRNA(Gln) + L-glutamate + ADP + phosphate + H(+). Allows the formation of correctly charged Gln-tRNA(Gln) through the transamidation of misacylated Glu-tRNA(Gln) in organisms which lack glutaminyl-tRNA synthetase. The reaction takes place in the presence of glutamine and ATP through an activated gamma-phospho-Glu-tRNA(Gln). This is Glutamyl-tRNA(Gln) amidotransferase subunit A from Methylorubrum extorquens (strain CM4 / NCIMB 13688) (Methylobacterium extorquens).